A 301-amino-acid polypeptide reads, in one-letter code: Inosose dehydratase (301 aa).

It belongs to the IolE/MocC family. Requires glutathione as cofactor. It depends on Co(2+) as a cofactor. Mn(2+) serves as cofactor.

The enzyme catalyses scyllo-inosose = 3D-3,5/4-trihydroxycyclohexane-1,2-dione + H2O. Its function is as follows. Catalyzes the dehydration of inosose (2-keto-myo-inositol, 2KMI or 2,4,6/3,5-pentahydroxycyclohexanone) to 3D-(3,5/4)-trihydroxycyclohexane-1,2-dione (D-2,3-diketo-4-deoxy-epi-inositol). The sequence is that of Inosose dehydratase from Salmonella typhimurium (strain LT2 / SGSC1412 / ATCC 700720).